A 117-amino-acid polypeptide reads, in one-letter code: Immunoglobulin kappa variable 1-17 (117 aa).

Residues 1–22 form the signal peptide; it reads MDMRVPAQLLGLLLLWFPGARC. The tract at residues 23–45 is framework-1; that stretch reads DIQMTQSPSSLSASVGDRVTITC. The region spanning 24 to 117 is the Ig-like domain; it reads IQMTQSPSSL…YYCLQHNSYP (94 aa). The cysteines at positions 45 and 110 are disulfide-linked. The segment at 46–56 is complementarity-determining-1; it reads RASQGIRNDLG. A framework-2 region spans residues 57–71; the sequence is WYQQKPGKAPKRLIY. Residues 72 to 78 form a complementarity-determining-2 region; sequence AASSLQS. The framework-3 stretch occupies residues 79–110; sequence GVPSRFSGSGSGTEFTLTISSLQPEDFATYYC. The segment at 111–117 is complementarity-determining-3; it reads LQHNSYP.

Immunoglobulins are composed of two identical heavy chains and two identical light chains; disulfide-linked.

It localises to the secreted. Its subcellular location is the cell membrane. V region of the variable domain of immunoglobulin light chains that participates in the antigen recognition. Immunoglobulins, also known as antibodies, are membrane-bound or secreted glycoproteins produced by B lymphocytes. In the recognition phase of humoral immunity, the membrane-bound immunoglobulins serve as receptors which, upon binding of a specific antigen, trigger the clonal expansion and differentiation of B lymphocytes into immunoglobulins-secreting plasma cells. Secreted immunoglobulins mediate the effector phase of humoral immunity, which results in the elimination of bound antigens. The antigen binding site is formed by the variable domain of one heavy chain, together with that of its associated light chain. Thus, each immunoglobulin has two antigen binding sites with remarkable affinity for a particular antigen. The variable domains are assembled by a process called V-(D)-J rearrangement and can then be subjected to somatic hypermutations which, after exposure to antigen and selection, allow affinity maturation for a particular antigen. The sequence is that of Immunoglobulin kappa variable 1-17 from Homo sapiens (Human).